The following is a 567-amino-acid chain: Oxygen-dependent choline dehydrogenase (567 aa).

6 to 35 lines the FAD pocket; it reads DYIIVGAGSAGNTLATRLTEDEGVTVLLLE. His-475 serves as the catalytic Proton acceptor.

The protein belongs to the GMC oxidoreductase family. FAD serves as cofactor.

It carries out the reaction choline + A = betaine aldehyde + AH2. The enzyme catalyses betaine aldehyde + NAD(+) + H2O = glycine betaine + NADH + 2 H(+). The protein operates within amine and polyamine biosynthesis; betaine biosynthesis via choline pathway; betaine aldehyde from choline (cytochrome c reductase route): step 1/1. Involved in the biosynthesis of the osmoprotectant glycine betaine. Catalyzes the oxidation of choline to betaine aldehyde and betaine aldehyde to glycine betaine at the same rate. This is Oxygen-dependent choline dehydrogenase from Pseudomonas fluorescens (strain SBW25).